Consider the following 913-residue polypeptide: Zinc finger protein 112 (913 aa).

The KRAB domain maps to 8-79 (VTFKDVAVVF…ETETPRDGCS (72 aa)). K256 participates in a covalent cross-link: Glycyl lysine isopeptide (Lys-Gly) (interchain with G-Cter in SUMO2). The C2H2-type 1; degenerate zinc-finger motif lies at 258–280 (YPCTGYRKAFSNDSSSEVHQQFH). The segment at 443–465 (YNSEECGNGFSLASHFQDLQIVH) adopts a C2H2-type 2; degenerate zinc-finger fold. Residues 471–493 (YKRYVCSNSFSHNLYLQGHPKIH) form a C2H2-type 3; degenerate zinc finger. The segment at 497–519 (KPRKEHGNGFNWSSKLKDHQRVH) adopts a C2H2-type 4; degenerate zinc-finger fold. 13 C2H2-type zinc fingers span residues 525–547 (YKCN…QRVH), 553–575 (YKCE…QRVH), 581–603 (YKCE…QRVH), 609–631 (YKCE…QRVH), 637–659 (FKCE…QRVH), 665–687 (YKCE…QRVH), 693–715 (YQCD…QSVH), 721–743 (YICE…QRVH), 749–771 (YKCE…RRVH), 777–799 (YKCE…QRVH), 805–827 (YKCE…HRVH), 833–855 (YKCE…QRVH), and 861–883 (YKCD…QRVH). A Glycyl lysine isopeptide (Lys-Gly) (interchain with G-Cter in SUMO2) cross-link involves residue K890.

Belongs to the krueppel C2H2-type zinc-finger protein family.

The protein resides in the nucleus. May be involved in transcriptional regulation. This Homo sapiens (Human) protein is Zinc finger protein 112 (ZNF112).